Reading from the N-terminus, the 353-residue chain is Thiamine-phosphate synthase (353 aa).

The segment at 1–128 (MESMPVAPST…ARTAAAVRYA (128 aa)) is unknown. The thiamine-phosphate synthase stretch occupies residues 129-353 (LYDHEVRILE…ASRQLLDLLT (225 aa)). Residues 185 to 189 (QYRRK) and Asn-217 each bind 4-amino-2-methyl-5-(diphosphooxymethyl)pyrimidine. Positions 218 and 237 each coordinate Mg(2+). Ser-256 is a binding site for 4-amino-2-methyl-5-(diphosphooxymethyl)pyrimidine. 282-284 (TAT) contributes to the 2-[(2R,5Z)-2-carboxy-4-methylthiazol-5(2H)-ylidene]ethyl phosphate binding site. Position 285 (Lys-285) interacts with 4-amino-2-methyl-5-(diphosphooxymethyl)pyrimidine. 2-[(2R,5Z)-2-carboxy-4-methylthiazol-5(2H)-ylidene]ethyl phosphate contacts are provided by residues Gly-312 and 332–333 (VS).

It belongs to the thiamine-phosphate synthase family. Mg(2+) serves as cofactor.

It carries out the reaction 2-[(2R,5Z)-2-carboxy-4-methylthiazol-5(2H)-ylidene]ethyl phosphate + 4-amino-2-methyl-5-(diphosphooxymethyl)pyrimidine + 2 H(+) = thiamine phosphate + CO2 + diphosphate. The enzyme catalyses 2-(2-carboxy-4-methylthiazol-5-yl)ethyl phosphate + 4-amino-2-methyl-5-(diphosphooxymethyl)pyrimidine + 2 H(+) = thiamine phosphate + CO2 + diphosphate. It catalyses the reaction 4-methyl-5-(2-phosphooxyethyl)-thiazole + 4-amino-2-methyl-5-(diphosphooxymethyl)pyrimidine + H(+) = thiamine phosphate + diphosphate. It functions in the pathway cofactor biosynthesis; thiamine diphosphate biosynthesis; thiamine phosphate from 4-amino-2-methyl-5-diphosphomethylpyrimidine and 4-methyl-5-(2-phosphoethyl)-thiazole: step 1/1. In terms of biological role, condenses 4-methyl-5-(beta-hydroxyethyl)thiazole monophosphate (THZ-P) and 2-methyl-4-amino-5-hydroxymethyl pyrimidine pyrophosphate (HMP-PP) to form thiamine monophosphate (TMP). The polypeptide is Thiamine-phosphate synthase (Synechococcus sp. (strain WH7803)).